The primary structure comprises 447 residues: Protein cortex (447 aa).

WD repeat units lie at residues 108–148, 149–188, 198–237, 281–325, 344–380, and 384–423; these read TYSY…IGHG, FAEY…KIMS, NMNC…ISWR, DSDW…VRDT, GELV…DQWG, and SGLD…NKMK. The D-box motif lies at 384–395; that stretch reads SGLDRVRTMIFS.

It belongs to the WD repeat CORT family.

It localises to the cytoplasm. Controls wing pigmentation patterning by regulating scale cell development, thereby playing a key role in mimicry and crypsis. Probably acts as an activator of the anaphase promoting complex/cyclosome (APC/C) that promotes the ubiquitin ligase activity and substrate specificity of the APC/C. The protein is Protein cortex of Heliconius melpomene (Postman butterfly).